Consider the following 645-residue polypeptide: Methionine--tRNA ligase (645 aa).

The 'HIGH' region signature appears at tyrosine 13–asparagine 23. Zn(2+) is bound by residues cysteine 128, cysteine 131, cysteine 145, and cysteine 148. The 'KMSKS' region signature appears at lysine 298–serine 302. Lysine 301 contacts ATP. The region spanning aspartate 544 to arginine 645 is the tRNA-binding domain.

The protein belongs to the class-I aminoacyl-tRNA synthetase family. MetG type 2A subfamily. Homodimer. Zn(2+) serves as cofactor.

It localises to the cytoplasm. The catalysed reaction is tRNA(Met) + L-methionine + ATP = L-methionyl-tRNA(Met) + AMP + diphosphate. Its function is as follows. Is required not only for elongation of protein synthesis but also for the initiation of all mRNA translation through initiator tRNA(fMet) aminoacylation. The chain is Methionine--tRNA ligase (metG) from Clostridium perfringens (strain 13 / Type A).